A 98-amino-acid polypeptide reads, in one-letter code: NADH-ubiquinone oxidoreductase chain 4L (98 aa).

The next 3 membrane-spanning stretches (helical) occupy residues 1–21 (MSLT…GLLM), 30–50 (LLCL…TILI), and 61–81 (IILL…LVAV).

It belongs to the complex I subunit 4L family. As to quaternary structure, core subunit of respiratory chain NADH dehydrogenase (Complex I) which is composed of 45 different subunits.

It is found in the mitochondrion inner membrane. It catalyses the reaction a ubiquinone + NADH + 5 H(+)(in) = a ubiquinol + NAD(+) + 4 H(+)(out). Its function is as follows. Core subunit of the mitochondrial membrane respiratory chain NADH dehydrogenase (Complex I) which catalyzes electron transfer from NADH through the respiratory chain, using ubiquinone as an electron acceptor. Part of the enzyme membrane arm which is embedded in the lipid bilayer and involved in proton translocation. The chain is NADH-ubiquinone oxidoreductase chain 4L (MT-ND4L) from Pipistrellus abramus (Japanese pipistrelle).